A 113-amino-acid polypeptide reads, in one-letter code: MTTDLKTRLTEINRQFGALGQAQPAAMSAFQGVMKAATQDGSLPAAVKELIAVALAVQKGCDDCVLFHTSQALRHRATREQLAEVLAINIEMGGGPGAMYASKALAYFDALNA.

The protein to H.influenzae HI_1053 and P.denitrificans COX locus Uncharacterized protein 4.

This is an uncharacterized protein from Cupriavidus necator (strain ATCC 17699 / DSM 428 / KCTC 22496 / NCIMB 10442 / H16 / Stanier 337) (Ralstonia eutropha).